The sequence spans 251 residues: Tyrosine transport ATP-binding protein (251 aa).

The region spanning 2–248 is the ABC transporter domain; sequence LQIKNLSKSF…TVEEILEKFE (247 aa). 39–46 is an ATP binding site; that stretch reads GSNGTGKS.

It belongs to the ABC transporter superfamily. The complex is probably composed of two ATP-binding proteins (CDR20291_0806), two transmembrane proteins (CDR20291_0807) and a solute-binding protein (CDR20291_0805).

The protein resides in the cell membrane. It carries out the reaction L-tyrosine(out) + ATP + H2O = L-tyrosine(in) + ADP + phosphate + H(+). In terms of biological role, probably part of an ABC transporter complex involved in tyrosine uptake. May also import phenylalanine. Probably responsible for energy coupling to the transport system. This is Tyrosine transport ATP-binding protein from Clostridioides difficile (strain R20291) (Peptoclostridium difficile).